A 236-amino-acid polypeptide reads, in one-letter code: MKKGFMLFTLLAAFSGFAQADDAAIQQTLAKMGIKSSDIQPAPVAGMKTVLTNSGVLYITDDGKHIIQGPMYDVSGTAPVNVTNKMLLKQLNALEKEMIVYKAPQEKHVITVFTDITCGYCHKLHEQMADYNALGITVRYLAFPRQGLDSDAEKEMKAIWCAKDKNKAFDDVMAGKSVAPASCDVDIADHYALGVQLGVSGTPAVVLSNGTLVPGYQPPKEMKEFLDEHQKMTSGK.

The first 20 residues, 1 to 20 (MKKGFMLFTLLAAFSGFAQA), serve as a signal peptide directing secretion. Residues 36–231 (SSDIQPAPVA…MKEFLDEHQK (196 aa)) enclose the Thioredoxin domain. Intrachain disulfides connect Cys-118-Cys-121 and Cys-161-Cys-183.

The protein belongs to the thioredoxin family. DsbC subfamily. In terms of assembly, homodimer.

The protein resides in the periplasm. In terms of biological role, required for disulfide bond formation in some periplasmic proteins. Acts by transferring its disulfide bond to other proteins and is reduced in the process. DsbC is reoxidized by a yet uncharacterized protein. Also acts as a disulfide isomerase. This Escherichia coli O157:H7 protein is Thiol:disulfide interchange protein DsbC (dsbC).